The sequence spans 743 residues: NAD(P)H-quinone oxidoreductase subunit 5, chloroplastic (743 aa).

16 helical membrane-spanning segments follow: residues 9-29, 40-60, 89-109, 125-145, 147-167, 185-205, 219-239, 258-278, 283-303, 327-347, 354-374, 396-416, 425-445, 548-568, 607-627, and 723-743; these read WIIP…LLLF, WAFQ…NLSI, IDPL…LVLI, FAYM…SNLI, IYIF…FWFT, GDFG…SFEF, NEVN…GAIA, TPIS…FLVA, LFIV…ITVF, LGYM…FHLI, ALLF…VGYC, ISFL…CFWS, WLYS…TAFY, LFPI…GIPF, VFSV…YKPV, and YLFF…FFNL.

The protein belongs to the complex I subunit 5 family. In terms of assembly, NDH is composed of at least 16 different subunits, 5 of which are encoded in the nucleus.

The protein resides in the plastid. Its subcellular location is the chloroplast thylakoid membrane. The catalysed reaction is a plastoquinone + NADH + (n+1) H(+)(in) = a plastoquinol + NAD(+) + n H(+)(out). It carries out the reaction a plastoquinone + NADPH + (n+1) H(+)(in) = a plastoquinol + NADP(+) + n H(+)(out). NDH shuttles electrons from NAD(P)H:plastoquinone, via FMN and iron-sulfur (Fe-S) centers, to quinones in the photosynthetic chain and possibly in a chloroplast respiratory chain. The immediate electron acceptor for the enzyme in this species is believed to be plastoquinone. Couples the redox reaction to proton translocation, and thus conserves the redox energy in a proton gradient. The polypeptide is NAD(P)H-quinone oxidoreductase subunit 5, chloroplastic (ndhF) (Carthamus tinctorius (Safflower)).